The chain runs to 45 residues: MAYKCARCKRTVEVDYEYAGVRCPYCGHRILMKERPTTVKRMKAI.

Residues C8, C23, and C26 each coordinate Zn(2+).

It belongs to the archaeal Rpo12/eukaryotic RPC10 RNA polymerase subunit family. Part of the RNA polymerase complex. Requires Zn(2+) as cofactor.

The protein resides in the cytoplasm. It catalyses the reaction RNA(n) + a ribonucleoside 5'-triphosphate = RNA(n+1) + diphosphate. In terms of biological role, DNA-dependent RNA polymerase (RNAP) catalyzes the transcription of DNA into RNA using the four ribonucleoside triphosphates as substrates. The sequence is that of DNA-directed RNA polymerase subunit Rpo12 from Methanothrix thermoacetophila (strain DSM 6194 / JCM 14653 / NBRC 101360 / PT) (Methanosaeta thermophila).